A 328-amino-acid polypeptide reads, in one-letter code: Coiled-coil domain-containing protein 54 (328 aa).

Residues Thr-122–Arg-151 adopt a coiled-coil conformation. Thr-182 carries the phosphothreonine modification. Basic and acidic residues predominate over residues Thr-186–Lys-197. A disordered region spans residues Thr-186–Thr-205.

The sequence is that of Coiled-coil domain-containing protein 54 (CCDC54) from Macaca fascicularis (Crab-eating macaque).